Reading from the N-terminus, the 322-residue chain is Aspartate carbamoyltransferase catalytic subunit (322 aa).

Residues Arg-65 and Thr-66 each coordinate carbamoyl phosphate. Lys-93 is a binding site for L-aspartate. Positions 115, 143, and 146 each coordinate carbamoyl phosphate. Residues Arg-176 and Arg-230 each contribute to the L-aspartate site. Residues Gly-271 and Pro-272 each contribute to the carbamoyl phosphate site.

The protein belongs to the aspartate/ornithine carbamoyltransferase superfamily. ATCase family. Heterododecamer (2C3:3R2) of six catalytic PyrB chains organized as two trimers (C3), and six regulatory PyrI chains organized as three dimers (R2).

It catalyses the reaction carbamoyl phosphate + L-aspartate = N-carbamoyl-L-aspartate + phosphate + H(+). Its pathway is pyrimidine metabolism; UMP biosynthesis via de novo pathway; (S)-dihydroorotate from bicarbonate: step 2/3. Catalyzes the condensation of carbamoyl phosphate and aspartate to form carbamoyl aspartate and inorganic phosphate, the committed step in the de novo pyrimidine nucleotide biosynthesis pathway. This Brucella anthropi (strain ATCC 49188 / DSM 6882 / CCUG 24695 / JCM 21032 / LMG 3331 / NBRC 15819 / NCTC 12168 / Alc 37) (Ochrobactrum anthropi) protein is Aspartate carbamoyltransferase catalytic subunit.